An 80-amino-acid chain; its full sequence is Large ribosomal subunit protein bL31 (80 aa).

Residues Cys16, Cys18, Cys36, and Cys39 each coordinate Zn(2+).

Belongs to the bacterial ribosomal protein bL31 family. Type A subfamily. Part of the 50S ribosomal subunit. Zn(2+) serves as cofactor.

Functionally, binds the 23S rRNA. In Methylacidiphilum infernorum (isolate V4) (Methylokorus infernorum (strain V4)), this protein is Large ribosomal subunit protein bL31.